Consider the following 430-residue polypeptide: Glutamate-1-semialdehyde 2,1-aminomutase (430 aa).

Lys270 is modified (N6-(pyridoxal phosphate)lysine).

The protein belongs to the class-III pyridoxal-phosphate-dependent aminotransferase family. HemL subfamily. In terms of assembly, homodimer. It depends on pyridoxal 5'-phosphate as a cofactor.

Its subcellular location is the cytoplasm. It carries out the reaction (S)-4-amino-5-oxopentanoate = 5-aminolevulinate. The protein operates within porphyrin-containing compound metabolism; protoporphyrin-IX biosynthesis; 5-aminolevulinate from L-glutamyl-tRNA(Glu): step 2/2. This chain is Glutamate-1-semialdehyde 2,1-aminomutase, found in Cupriavidus necator (strain ATCC 17699 / DSM 428 / KCTC 22496 / NCIMB 10442 / H16 / Stanier 337) (Ralstonia eutropha).